The chain runs to 372 residues: N-acetylneuraminate-9-phosphate synthase (372 aa).

Residues 314 to 372 (SIVAARNLNKGYRLQLADMAIKVSEPSGLTAEDFLDLVGKELADNIGEDEPILGNSIIN) enclose the AFP-like domain.

The enzyme catalyses aldehydo-N-acetyl-D-mannosamine 6-phosphate + phosphoenolpyruvate + H2O = N-acetylneuraminate 9-phosphate + phosphate. It carries out the reaction aldehydo-D-mannose 6-phosphate + phosphoenolpyruvate + H2O = 3-deoxy-D-glycero-beta-D-galacto-non-2-ulopyranosonate 9-phosphate + phosphate. Its function is as follows. Catalyzes the condensation of phosphoenolpyruvate (PEP) and N-acetylmannosamine 6-phosphate (ManNAc-6-P) or D-mannose 6-phosphate (Man-6-P) to generate the phosphorylated forms of both the sialic acids N-acetylneuraminic acid (Neu5Ac) and deaminoneuraminic acid (KDN), respectively. Essential for biosynthesis of sialic acids in neurons of the central nervous system. The sequence is that of N-acetylneuraminate-9-phosphate synthase from Drosophila melanogaster (Fruit fly).